Here is a 65-residue protein sequence, read N- to C-terminus: Small ribosomal subunit protein bS21 (65 aa).

The segment at 45-65 (GRLKRSRSKRRAQRANEERNS) is disordered. Positions 48 to 57 (KRSRSKRRAQ) are enriched in basic residues.

It belongs to the bacterial ribosomal protein bS21 family.

The sequence is that of Small ribosomal subunit protein bS21 from Chlorobium luteolum (strain DSM 273 / BCRC 81028 / 2530) (Pelodictyon luteolum).